Consider the following 685-residue polypeptide: ATP-dependent permease MDL1 (685 aa).

The span at 48–70 (FNSKSSTAPNTEANSNGSTNSQS) shows a compositional bias: polar residues. A disordered region spans residues 48–76 (FNSKSSTAPNTEANSNGSTNSQSDTKKPR). An N-linked (GlcNAc...) asparagine glycan is attached at Asn63. The helical transmembrane segment at 96-116 (LIFFALICLVTTSATSMALPL) threads the bilayer. An ABC transmembrane type-1 domain is found at 97-407 (IFFALICLVT…LGNFYTELMK (311 aa)). The interval 125-147 (TKKDDDDDKDNDNDDKDDTQPSD) is disordered. The segment covering 129–141 (DDDDKDNDNDDKD) has biased composition (acidic residues). The chain crosses the membrane as a helical span at residues 158 to 180 (FYSALGVLFIVSASTNFGRIYLL). N-linked (GlcNAc...) asparagine glycosylation occurs at Asn239. The chain crosses the membrane as a helical span at residues 266 to 282 (LCMSLIFPPLITMSWFY). Residue Asn336 is glycosylated (N-linked (GlcNAc...) asparagine). The next 2 helical transmembrane spans lie at 353 to 373 (GFIGNVTMIGLLIMGTKLIGA) and 381 to 401 (LSSFMMYAVYTGTSVFGLGNF). One can recognise an ABC transporter domain in the interval 440–680 (IEFKGIDFTY…PNSQFNKLLK (241 aa)). Residue 475 to 482 (GPSGSGKS) participates in ATP binding. Asn553 and Asn576 each carry an N-linked (GlcNAc...) asparagine glycan.

The protein belongs to the ABC transporter superfamily. ABCB family. Mitochondrial peptide exporter (TC 3.A.1.212) subfamily.

It localises to the membrane. The protein is ATP-dependent permease MDL1 (MDL1) of Candida albicans (Yeast).